The sequence spans 130 residues: Histone H2A type 2-B (130 aa).

Residues 1 to 22 (MSGRGKQGGKARAKAKSRSSRA) are disordered. At Ser-2 the chain carries N-acetylserine. Phosphoserine; by RPS6KA5 is present on Ser-2. Residue Arg-4 is modified to Citrulline; alternate. Symmetric dimethylarginine; by PRMT5; alternate is present on Arg-4. Lys-6 and Lys-10 each carry N6-(2-hydroxyisobutyryl)lysine; alternate. An N6-(beta-hydroxybutyryl)lysine; alternate modification is found at Lys-6. Positions 7–19 (QGGKARAKAKSRS) are enriched in basic residues. Residue Lys-10 is modified to N6-lactoyllysine; alternate. Residue Lys-10 is modified to N6-succinyllysine; alternate. Residues Lys-14 and Lys-16 each participate in a glycyl lysine isopeptide (Lys-Gly) (interchain with G-Cter in ubiquitin) cross-link. Lys-37 carries the N6-(2-hydroxyisobutyryl)lysine; alternate modification. Lys-37 carries the N6-(beta-hydroxybutyryl)lysine; alternate modification. N6-crotonyllysine; alternate is present on Lys-37. An N6-(2-hydroxyisobutyryl)lysine mark is found at Lys-75 and Lys-76. Lys-96 carries the post-translational modification N6-(2-hydroxyisobutyryl)lysine; alternate. The residue at position 96 (Lys-96) is an N6-succinyllysine; alternate. At Lys-96 the chain carries N6-glutaryllysine; alternate. Gln-105 is subject to N5-methylglutamine. The residue at position 119 (Lys-119) is an N6-(2-hydroxyisobutyryl)lysine; alternate. An N6-crotonyllysine; alternate mark is found at Lys-119 and Lys-120. N6-glutaryllysine; alternate occurs at positions 119 and 120. Lys-120 is subject to N6-(beta-hydroxybutyryl)lysine; alternate. A Glycyl lysine isopeptide (Lys-Gly) (interchain with G-Cter in ubiquitin); alternate cross-link involves residue Lys-120. The residue at position 121 (Thr-121) is a Phosphothreonine; by DCAF1.

It belongs to the histone H2A family. As to quaternary structure, the nucleosome is a histone octamer containing two molecules each of H2A, H2B, H3 and H4 assembled in one H3-H4 heterotetramer and two H2A-H2B heterodimers. The octamer wraps approximately 147 bp of DNA. Deiminated on Arg-4 in granulocytes upon calcium entry. Post-translationally, monoubiquitination of Lys-120 (H2AK119Ub) by RING1, TRIM37 and RNF2/RING2 complex gives a specific tag for epigenetic transcriptional repression and participates in X chromosome inactivation of female mammals. It is involved in the initiation of both imprinted and random X inactivation. Ubiquitinated H2A is enriched in inactive X chromosome chromatin. Ubiquitination of H2A functions downstream of methylation of 'Lys-27' of histone H3 (H3K27me). H2AK119Ub by RNF2/RING2 can also be induced by ultraviolet and may be involved in DNA repair. Following DNA double-strand breaks (DSBs), it is ubiquitinated through 'Lys-63' linkage of ubiquitin moieties by the E2 ligase UBE2N and the E3 ligases RNF8 and RNF168, leading to the recruitment of repair proteins to sites of DNA damage. Ubiquitination at Lys-14 and Lys-16 (H2AK13Ub and H2AK15Ub, respectively) in response to DNA damage is initiated by RNF168 that mediates monoubiquitination at these 2 sites, and 'Lys-63'-linked ubiquitin are then conjugated to monoubiquitin; RNF8 is able to extend 'Lys-63'-linked ubiquitin chains in vitro. Deubiquitinated by USP51 at Lys-14 and Lys-16 (H2AK13Ub and H2AK15Ub, respectively) after damaged DNA is repaired. H2AK119Ub and ionizing radiation-induced 'Lys-63'-linked ubiquitination (H2AK13Ub and H2AK15Ub) are distinct events. In terms of processing, phosphorylation on Ser-2 (H2AS1ph) is enhanced during mitosis. Phosphorylation on Ser-2 by RPS6KA5/MSK1 directly represses transcription. Acetylation of H3 inhibits Ser-2 phosphorylation by RPS6KA5/MSK1. Phosphorylation at Thr-121 (H2AT120ph) by DCAF1 is present in the regulatory region of many tumor suppresor genes and down-regulates their transcription. Symmetric dimethylation on Arg-4 by the PRDM1/PRMT5 complex may play a crucial role in the germ-cell lineage. Post-translationally, glutamine methylation at Gln-105 (H2AQ104me) by FBL is specifically dedicated to polymerase I. It is present at 35S ribosomal DNA locus and impairs binding of the FACT complex. In terms of processing, crotonylation (Kcr) is specifically present in male germ cells and marks testis-specific genes in post-meiotic cells, including X-linked genes that escape sex chromosome inactivation in haploid cells. Crotonylation marks active promoters and enhancers and confers resistance to transcriptional repressors. It is also associated with post-meiotically activated genes on autosomes. Hydroxybutyrylation of histones is induced by starvation. Post-translationally, lactylated in macrophages by EP300/P300 by using lactoyl-CoA directly derived from endogenous or exogenous lactate, leading to stimulates gene transcription.

It is found in the nucleus. The protein resides in the chromosome. In terms of biological role, core component of nucleosome. Nucleosomes wrap and compact DNA into chromatin, limiting DNA accessibility to the cellular machineries which require DNA as a template. Histones thereby play a central role in transcription regulation, DNA repair, DNA replication and chromosomal stability. DNA accessibility is regulated via a complex set of post-translational modifications of histones, also called histone code, and nucleosome remodeling. The polypeptide is Histone H2A type 2-B (Mus musculus (Mouse)).